A 345-amino-acid polypeptide reads, in one-letter code: D-amino-acid oxidase (345 aa).

FAD contacts are provided by Ser10, Ile13, Ser49, Gly53, and Asn55. (R)-lactate contacts are provided by Tyr230 and Arg290. Positions 230 and 290 each coordinate anthranilate. Positions 290, 317, 320, 321, and 322 each coordinate FAD. Positions 343–345 match the Microbody targeting signal motif; sequence AKL.

The protein belongs to the DAMOX/DASOX family. FAD serves as cofactor.

It localises to the peroxisome matrix. It catalyses the reaction a D-alpha-amino acid + O2 + H2O = a 2-oxocarboxylate + H2O2 + NH4(+). The catalysed reaction is D-methionine + O2 + H2O = 4-methylsulfanyl-2-oxobutanoate + H2O2 + NH4(+). Catalyzes the oxidative deamination of D-amino acids with broad substrate specificity. Enables the organism to utilize D-amino acids as a source of nutrients. Enables the organism to utilize D-alanine as a nitrogen source, although it is not strictly required for this process. Also enables utilization of D-alanine as a carbon source. The protein is D-amino-acid oxidase of Candida boidinii (Yeast).